A 141-amino-acid chain; its full sequence is Hemoglobin D subunit alpha (141 aa).

The region spanning 1-141 (MLTEDDKQLI…VSAVLAEKYR (141 aa)) is the Globin domain. His-58 serves as a coordination point for O2. His-87 is a heme b binding site.

It belongs to the globin family. As to quaternary structure, tetramer of two alpha chains and two beta chains. Red blood cells.

Involved in oxygen transport from the lung to the various peripheral tissues. This chain is Hemoglobin D subunit alpha, found in Aldabrachelys gigantea (Aldabra giant tortoise).